The sequence spans 307 residues: Geranylgeranyl diphosphate synthase (307 aa).

Isopentenyl diphosphate is bound by residues Lys-52, Arg-55, and His-86. 2 residues coordinate Mg(2+): Asp-93 and Asp-99. Arg-104 contributes to the (2E,6E)-farnesyl diphosphate binding site. Arg-105 provides a ligand contact to isopentenyl diphosphate. (2E,6E)-farnesyl diphosphate is bound by residues Lys-188, Thr-189, and Gln-226.

The protein belongs to the FPP/GGPP synthase family. Requires Mg(2+) as cofactor.

It catalyses the reaction isopentenyl diphosphate + (2E,6E)-farnesyl diphosphate = (2E,6E,10E)-geranylgeranyl diphosphate + diphosphate. It participates in isoprenoid biosynthesis; geranylgeranyl diphosphate biosynthesis; geranylgeranyl diphosphate from farnesyl diphosphate and isopentenyl diphosphate: step 1/1. Its function is as follows. Catalyzes the condensation of farnesyl diphosphate (FPP) and isopentenyl diphosphate (IPP) to yield geranylgeranyl diphosphate (GGPP) needed for biosynthesis of carotenoids and diterpenes. The protein is Geranylgeranyl diphosphate synthase (crtE) of Pseudescherichia vulneris (Escherichia vulneris).